Consider the following 486-residue polypeptide: MLTEQPNWLMQRAQLTPERIALIYEDQTVTFAELFAASKRMAEQLAAHSVRKGDTAAILLQNRAEMVYAVHACFLLGVKAVLLNTKLSTHERLFQLEDSGSGFLLTDSSFEKKEYEHIVQTIDVDELMKEAAEEIEIEAYMQMDATATLMYTSGTTGKPKGVQQTFGNHYFSAVSSALNLGITEQDRWLIALPLFHISGLSALFKSVIYGMTVVLHQRFSVSDVLHSINRHEVTMISAVQTMLASLLEETNRCPESIRCILLGGGPAPLPLLEECREKGFPVFQSYGMTETCSQIVTLSPEFSMEKLGSAGKPLFSCEIKIERDGQVCEPYEHGEIMVKGPNVMKSYFNRESANEASFQNGWLKTGDLGYLDNEGFLYVLDRRSDLIISGGENIYPAEVESVLLSHPAVAEAGVSGAEDKKWGKVPHAYLVLHKPVSAGELTDYCKERLAKYKIPAKFFVLDRLPRNASNKLLRNQLKDARKGELL.

The protein belongs to the ATP-dependent AMP-binding enzyme family. MenE subfamily.

It catalyses the reaction 2-succinylbenzoate + ATP + CoA = 2-succinylbenzoyl-CoA + AMP + diphosphate. The protein operates within quinol/quinone metabolism; 1,4-dihydroxy-2-naphthoate biosynthesis; 1,4-dihydroxy-2-naphthoate from chorismate: step 5/7. Its pathway is quinol/quinone metabolism; menaquinone biosynthesis. Its function is as follows. Converts 2-succinylbenzoate (OSB) to 2-succinylbenzoyl-CoA (OSB-CoA). The protein is 2-succinylbenzoate--CoA ligase of Bacillus subtilis (strain 168).